Reading from the N-terminus, the 357-residue chain is Holliday junction branch migration complex subunit RuvB (357 aa).

Residues 1–15 (MAIQSDSLSSLPDSP) show a composition bias toward low complexity. The disordered stretch occupies residues 1–30 (MAIQSDSLSSLPDSPRIVAPQPVSPNEESI). Residues 13–195 (DSPRIVAPQP…FGIVSRLEFY (183 aa)) form a large ATPase domain (RuvB-L) region. Residues Leu34, Arg35, Gly76, Lys79, Thr80, Thr81, 142–144 (EDF), Arg185, Tyr195, and Arg232 each bind ATP. Position 80 (Thr80) interacts with Mg(2+). Residues 196 to 266 (NTDELARIVT…AAGRALAMLD (71 aa)) are small ATPAse domain (RuvB-S). The tract at residues 269 to 357 (PQGLDVMDRK…SGGTGELFSK (89 aa)) is head domain (RuvB-H). DNA-binding residues include Arg305, Arg324, and Arg329.

It belongs to the RuvB family. As to quaternary structure, homohexamer. Forms an RuvA(8)-RuvB(12)-Holliday junction (HJ) complex. HJ DNA is sandwiched between 2 RuvA tetramers; dsDNA enters through RuvA and exits via RuvB. An RuvB hexamer assembles on each DNA strand where it exits the tetramer. Each RuvB hexamer is contacted by two RuvA subunits (via domain III) on 2 adjacent RuvB subunits; this complex drives branch migration. In the full resolvosome a probable DNA-RuvA(4)-RuvB(12)-RuvC(2) complex forms which resolves the HJ.

The protein localises to the cytoplasm. The catalysed reaction is ATP + H2O = ADP + phosphate + H(+). The RuvA-RuvB-RuvC complex processes Holliday junction (HJ) DNA during genetic recombination and DNA repair, while the RuvA-RuvB complex plays an important role in the rescue of blocked DNA replication forks via replication fork reversal (RFR). RuvA specifically binds to HJ cruciform DNA, conferring on it an open structure. The RuvB hexamer acts as an ATP-dependent pump, pulling dsDNA into and through the RuvAB complex. RuvB forms 2 homohexamers on either side of HJ DNA bound by 1 or 2 RuvA tetramers; 4 subunits per hexamer contact DNA at a time. Coordinated motions by a converter formed by DNA-disengaged RuvB subunits stimulates ATP hydrolysis and nucleotide exchange. Immobilization of the converter enables RuvB to convert the ATP-contained energy into a lever motion, pulling 2 nucleotides of DNA out of the RuvA tetramer per ATP hydrolyzed, thus driving DNA branch migration. The RuvB motors rotate together with the DNA substrate, which together with the progressing nucleotide cycle form the mechanistic basis for DNA recombination by continuous HJ branch migration. Branch migration allows RuvC to scan DNA until it finds its consensus sequence, where it cleaves and resolves cruciform DNA. The chain is Holliday junction branch migration complex subunit RuvB from Bordetella pertussis (strain Tohama I / ATCC BAA-589 / NCTC 13251).